The sequence spans 321 residues: LIMR family protein SELMODRAFT_432210 (321 aa).

A run of 5 helical transmembrane segments spans residues 28–48 (KQLW…VIPF), 116–133 (CFSL…LDLW), 139–159 (LCVF…FGGV), 240–260 (LVFG…ILVF), and 284–304 (LLGT…VISG).

Belongs to the LIMR family.

Its subcellular location is the membrane. The chain is LIMR family protein SELMODRAFT_432210 from Selaginella moellendorffii (Spikemoss).